The primary structure comprises 397 residues: Phosphoglycerate kinase (397 aa).

Substrate is bound by residues 26–28, Arg42, 65–68, Arg119, and Arg152; these read DLN and HLGR. Residues Lys203, Glu325, and 351–354 each bind ATP; that span reads GGDT.

The protein belongs to the phosphoglycerate kinase family. In terms of assembly, monomer.

It is found in the cytoplasm. It carries out the reaction (2R)-3-phosphoglycerate + ATP = (2R)-3-phospho-glyceroyl phosphate + ADP. It participates in carbohydrate degradation; glycolysis; pyruvate from D-glyceraldehyde 3-phosphate: step 2/5. The polypeptide is Phosphoglycerate kinase (Bordetella bronchiseptica (strain ATCC BAA-588 / NCTC 13252 / RB50) (Alcaligenes bronchisepticus)).